Consider the following 122-residue polypeptide: Small ribosomal subunit protein uS13 (122 aa).

The interval 94–122 (GLPVRGQVTQKNARTRKGPRKTVAGKKGK) is disordered. The span at 106–122 (ARTRKGPRKTVAGKKGK) shows a compositional bias: basic residues.

This sequence belongs to the universal ribosomal protein uS13 family. As to quaternary structure, part of the 30S ribosomal subunit. Forms a loose heterodimer with protein S19. Forms two bridges to the 50S subunit in the 70S ribosome.

Located at the top of the head of the 30S subunit, it contacts several helices of the 16S rRNA. In the 70S ribosome it contacts the 23S rRNA (bridge B1a) and protein L5 of the 50S subunit (bridge B1b), connecting the 2 subunits; these bridges are implicated in subunit movement. Contacts the tRNAs in the A and P-sites. This chain is Small ribosomal subunit protein uS13, found in Mycoplasma mobile (strain ATCC 43663 / 163K / NCTC 11711) (Mesomycoplasma mobile).